The following is a 159-amino-acid chain: Phosphoribosylaminoimidazole carboxylase (159 aa).

The substrate site is built by Ser-11, Asp-14, Ser-38, Lys-41, Gly-67, and Ser-69.

The catalysed reaction is 5-amino-1-(5-phospho-D-ribosyl)imidazole-4-carboxylate + H(+) = 5-amino-1-(5-phospho-beta-D-ribosyl)imidazole + CO2. The protein operates within purine metabolism; IMP biosynthesis via de novo pathway; 5-amino-1-(5-phospho-D-ribosyl)imidazole-4-carboxylate from 5-amino-1-(5-phospho-D-ribosyl)imidazole (carboxylase route): step 1/1. Catalyzes the reversible conversion of 5-aminoimidazole ribonucleotide (AIR) and CO(2) to 4-carboxy-5-aminoimidazole ribonucleotide (CAIR). Does not accept N5-carboxyaminoimidazole ribonucleotide (N5-CAIR) as a substrate. In Treponema denticola (strain ATCC 35405 / DSM 14222 / CIP 103919 / JCM 8153 / KCTC 15104), this protein is Phosphoribosylaminoimidazole carboxylase.